The sequence spans 32 residues: Cytochrome b6-f complex subunit 7 (32 aa).

Residues 9-27 (AAVFWILIPIGLVGGALLL) form a helical membrane-spanning segment.

This sequence belongs to the PetM family. In terms of assembly, the 4 large subunits of the cytochrome b6-f complex are cytochrome b6, subunit IV (17 kDa polypeptide, PetD), cytochrome f and the Rieske protein, while the 4 small subunits are PetG, PetL, PetM and PetN. The complex functions as a dimer.

It localises to the cellular thylakoid membrane. Functionally, component of the cytochrome b6-f complex, which mediates electron transfer between photosystem II (PSII) and photosystem I (PSI), cyclic electron flow around PSI, and state transitions. The protein is Cytochrome b6-f complex subunit 7 of Prochlorococcus marinus (strain MIT 9515).